The sequence spans 1121 residues: Linoleate 10R-lipoxygenase (1121 aa).

Positions 1–66 (MLRRFSSTFK…NEKKGNSVSP (66 aa)) are disordered. Positions 22–36 (TASSSSAAVANTNNN) are enriched in low complexity. Over residues 50–61 (SSSDDDRNEKKG) the composition is skewed to basic and acidic residues. The active-site Proton acceptor is H253. Ca(2+)-binding residues include D254, S269, Y271, D273, and S275.

It belongs to the peroxidase family.

The catalysed reaction is (9Z,12Z)-octadecadienoate + O2 = (8E,10R,12Z)-10-hydroperoxyoctadeca-8,12-dienoate. Functionally, responsible for the synthesis of various fatty acid-derived oxylipins. Oxidizes linoleic acid primarily to 10R-hydroperoxy-8,12-octadecadienoic acid (10R-HPODE) and, to a lesser extent, 8R-hydroperoxylinoleic acid (8R-HPODE). Also synthesizes 10-hydroxy-octadeca-8,12-dienoic acid (10-HODE) from linoleic acid and primarily 8R-hydroxy-octadeca-9-monoenoic acid (8-HOME, also known as psiB beta) from oleic acid. 8-HOME forms part of psi factor, a mixture of oxylipins that regulates the balance between sexual and asexual spore production. Displays epoxyalcohol synthase activity. Plays a role in the synthesis of prostaglandins which may be required for pathogenicity. The chain is Linoleate 10R-lipoxygenase from Aspergillus fumigatus (strain ATCC MYA-4609 / CBS 101355 / FGSC A1100 / Af293) (Neosartorya fumigata).